The sequence spans 746 residues: NAD(P)H-quinone oxidoreductase subunit 5, chloroplastic (746 aa).

A run of 16 helical transmembrane segments spans residues 9-29 (WIIP…LLLF), 40-60 (WTFL…YLSI), 89-109 (IDPL…LVLI), 125-145 (FAYM…SNLI), 147-167 (VYFF…FWFT), 185-205 (GDFG…SFEF), 221-241 (VNLL…IAKS), 258-278 (TPIS…FLVA), 280-300 (LLPL…IGII), 327-347 (LGYM…FHLI), 354-374 (ALLF…VGYS), 396-416 (TAFL…CFWS), 425-445 (LLFS…TAFY), 547-567 (ILFP…IGIP), 608-628 (FSVS…KPFY), and 723-743 (YLFL…FFYF).

This sequence belongs to the complex I subunit 5 family. NDH is composed of at least 16 different subunits, 5 of which are encoded in the nucleus.

The protein localises to the plastid. It localises to the chloroplast thylakoid membrane. The catalysed reaction is a plastoquinone + NADH + (n+1) H(+)(in) = a plastoquinol + NAD(+) + n H(+)(out). The enzyme catalyses a plastoquinone + NADPH + (n+1) H(+)(in) = a plastoquinol + NADP(+) + n H(+)(out). Its function is as follows. NDH shuttles electrons from NAD(P)H:plastoquinone, via FMN and iron-sulfur (Fe-S) centers, to quinones in the photosynthetic chain and possibly in a chloroplast respiratory chain. The immediate electron acceptor for the enzyme in this species is believed to be plastoquinone. Couples the redox reaction to proton translocation, and thus conserves the redox energy in a proton gradient. The polypeptide is NAD(P)H-quinone oxidoreductase subunit 5, chloroplastic (ndhF) (Lepidium virginicum (Virginia pepperweed)).